A 134-amino-acid polypeptide reads, in one-letter code: Small ribosomal subunit protein uS8c (134 aa).

The protein belongs to the universal ribosomal protein uS8 family. In terms of assembly, part of the 30S ribosomal subunit.

It localises to the plastid. The protein resides in the chloroplast. Its function is as follows. One of the primary rRNA binding proteins, it binds directly to 16S rRNA central domain where it helps coordinate assembly of the platform of the 30S subunit. This is Small ribosomal subunit protein uS8c (rps8) from Eucalyptus globulus subsp. globulus (Tasmanian blue gum).